The chain runs to 131 residues: L-ectoine synthase (131 aa).

It belongs to the ectoine synthase family.

The catalysed reaction is (2S)-4-acetamido-2-aminobutanoate = L-ectoine + H2O. It functions in the pathway amine and polyamine biosynthesis; ectoine biosynthesis; L-ectoine from L-aspartate 4-semialdehyde: step 3/3. Catalyzes the circularization of gamma-N-acetyl-alpha,gamma-diaminobutyric acid (ADABA) to ectoine (1,4,5,6-tetrahydro-2-methyl-4-pyrimidine carboxylic acid), which is an excellent osmoprotectant. In Wolinella succinogenes (strain ATCC 29543 / DSM 1740 / CCUG 13145 / JCM 31913 / LMG 7466 / NCTC 11488 / FDC 602W) (Vibrio succinogenes), this protein is L-ectoine synthase.